The sequence spans 440 residues: 23S rRNA (uracil(1939)-C(5))-methyltransferase RlmD (440 aa).

Residues 10-68 (KSTQPQRIEFTVDSLDHHCVGIGRHQGKAIFIEGALPGELVKARILEDKKQYAHAALQQ) enclose the TRAM domain. Residues cysteine 81, cysteine 87, cysteine 90, and cysteine 169 each coordinate [4Fe-4S] cluster. S-adenosyl-L-methionine is bound by residues glutamine 273, phenylalanine 302, asparagine 307, glutamate 323, aspartate 350, and aspartate 371. The active-site Nucleophile is the cysteine 397.

Belongs to the class I-like SAM-binding methyltransferase superfamily. RNA M5U methyltransferase family. RlmD subfamily.

The enzyme catalyses uridine(1939) in 23S rRNA + S-adenosyl-L-methionine = 5-methyluridine(1939) in 23S rRNA + S-adenosyl-L-homocysteine + H(+). In terms of biological role, catalyzes the formation of 5-methyl-uridine at position 1939 (m5U1939) in 23S rRNA. This is 23S rRNA (uracil(1939)-C(5))-methyltransferase RlmD from Aeromonas hydrophila subsp. hydrophila (strain ATCC 7966 / DSM 30187 / BCRC 13018 / CCUG 14551 / JCM 1027 / KCTC 2358 / NCIMB 9240 / NCTC 8049).